Reading from the N-terminus, the 348-residue chain is S-adenosylmethionine:tRNA ribosyltransferase-isomerase (348 aa).

The protein belongs to the QueA family. As to quaternary structure, monomer.

It is found in the cytoplasm. It carries out the reaction 7-aminomethyl-7-carbaguanosine(34) in tRNA + S-adenosyl-L-methionine = epoxyqueuosine(34) in tRNA + adenine + L-methionine + 2 H(+). The protein operates within tRNA modification; tRNA-queuosine biosynthesis. Its function is as follows. Transfers and isomerizes the ribose moiety from AdoMet to the 7-aminomethyl group of 7-deazaguanine (preQ1-tRNA) to give epoxyqueuosine (oQ-tRNA). This Cytophaga hutchinsonii (strain ATCC 33406 / DSM 1761 / CIP 103989 / NBRC 15051 / NCIMB 9469 / D465) protein is S-adenosylmethionine:tRNA ribosyltransferase-isomerase.